An 845-amino-acid chain; its full sequence is Matrin-3 (845 aa).

S2 is modified (N-acetylserine). The residue at position 3 (K3) is an N6-acetyllysine; alternate. A Glycyl lysine isopeptide (Lys-Gly) (interchain with G-Cter in SUMO2); alternate cross-link involves residue K3. S4, S9, S14, S22, S41, S118, and S126 each carry phosphoserine. Residues K132 and K146 each participate in a glycyl lysine isopeptide (Lys-Gly) (interchain with G-Cter in SUMO2) cross-link. 2 disordered regions span residues 147–174 (RRRTEEGPTLSYGRDGRSATREPPYRVP) and 187–213 (DSFDDRGPSLNPVLDYDHGSRSQESGY). At T150 the chain carries Phosphothreonine. At S157 the chain carries Phosphoserine. Residue Y158 is modified to Phosphotyrosine. Positions 160–174 (RDGRSATREPPYRVP) are enriched in basic and acidic residues. Phosphoserine is present on residues S164, S188, and S195. The segment covering 201 to 213 (DYDHGSRSQESGY) has biased composition (basic and acidic residues). Y202 carries the phosphotyrosine modification. Residues S206, S208, and S211 each carry the phosphoserine modification. Position 219 is a phosphotyrosine (Y219). Phosphoserine is present on S234. K245 is covalently cross-linked (Glycyl lysine isopeptide (Lys-Gly) (interchain with G-Cter in SUMO2)). S264 carries the post-translational modification Phosphoserine. A Glycyl lysine isopeptide (Lys-Gly) (interchain with G-Cter in SUMO2) cross-link involves residue K269. S275 is subject to Phosphoserine. The segment at 342–394 (PFMLQQSTNPAPGILGPPPPSFHLGGPAVGPRGNLGAGNGNLQGPRHMQKGRV) is disordered. One can recognise an RRM 1 domain in the interval 398–473 (RVVHIMDFQR…KPVRVHLSQK (76 aa)). Glycyl lysine isopeptide (Lys-Gly) (interchain with G-Cter in SUMO2) cross-links involve residues K478, K487, and K491. Positions 496–571 (RVIHLSNLPH…RCVKVDLSEK (76 aa)) constitute an RRM 2 domain. Phosphoserine occurs at positions 509 and 511. K515 is covalently cross-linked (Glycyl lysine isopeptide (Lys-Gly) (interchain with G-Cter in SUMO2)). An N6-acetyllysine; alternate modification is found at K522. K522 is covalently cross-linked (Glycyl lysine isopeptide (Lys-Gly) (interchain with G-Cter in SUMO2); alternate). A Phosphoserine modification is found at S533. Residues K554 and K555 each participate in a glycyl lysine isopeptide (Lys-Gly) (interchain with G-Cter in SUMO2) cross-link. K571 carries the N6-acetyllysine modification. The segment at 588-785 (KKDKSRKRSY…EYRIGPYQPN (198 aa)) is disordered. 4 positions are modified to phosphoserine: S596, S598, S604, and S606. Residues 600–643 (DGKESPSDKKSKTDGAQKTENPAEGKEQEEKSGEDGEKDTKDDQ) are compositionally biased toward basic and acidic residues. Glycyl lysine isopeptide (Lys-Gly) (interchain with G-Cter in SUMO2) cross-links involve residues K617 and K630. The segment covering 653–665 (ESEDELLVDEEEA) has biased composition (acidic residues). 4 positions are modified to phosphoserine: S654, S671, S673, and S674. T679 is subject to Phosphothreonine. S689 is modified (phosphoserine). Over residues 689–704 (SDGKKEPSDKAVKKDA) the composition is skewed to basic and acidic residues. Residues 708 to 716 (SKKKLKKVD) carry the Nuclear localization signal motif. Glycyl lysine isopeptide (Lys-Gly) (interchain with G-Cter in SUMO2) cross-links involve residues K717 and K734. T739 carries the post-translational modification Phosphothreonine. Residues S745, S757, and S760 each carry the phosphoserine modification. The span at 765-778 (DENKEDYTIPDEYR) shows a compositional bias: basic and acidic residues. Residue K768 forms a Glycyl lysine isopeptide (Lys-Gly) (interchain with G-Cter in SUMO2) linkage. The segment at 799–830 (FYCKLCSLFYTNEEVAKNTHCSSLPHYQKLKK) adopts a Matrin-type zinc-finger fold. K834 is modified (N6-acetyllysine; alternate). Residue K834 forms a Glycyl lysine isopeptide (Lys-Gly) (interchain with G-Cter in SUMO2); alternate linkage.

Part of a complex consisting of SFPQ, NONO and MATR3. Interacts with AGO1 and AGO2. Part of a complex composed at least of ASH2L, EMSY, HCFC1, HSPA8, CCAR2, MATR3, MKI67, RBBP5, TUBB2A, WDR5 and ZNF335; this complex may have a histone H3-specific methyltransferase activity. Interacts with TARDBP. Part of the HDP-RNP complex composed of at least HEXIM1, PRKDC, XRCC5, XRCC6, paraspeckle proteins (SFPQ, NONO, PSPC1, RBM14, and MATR3) and NEAT1 RNA. Interacts with FUS. Interacts with IGF2BP1. Interacts with IGF2BP2 and IGF2BP3. Interacts with RBPMS.

It is found in the nucleus matrix. In terms of biological role, may play a role in transcription or may interact with other nuclear matrix proteins to form the internal fibrogranular network. In association with the SFPQ-NONO heteromer may play a role in nuclear retention of defective RNAs. Plays a role in the regulation of DNA virus-mediated innate immune response by assembling into the HDP-RNP complex, a complex that serves as a platform for IRF3 phosphorylation and subsequent innate immune response activation through the cGAS-STING pathway. Binds to N6-methyladenosine (m6A)-containing mRNAs and contributes to MYC stability by binding to m6A-containing MYC mRNAs. May bind to specific miRNA hairpins. In Rattus norvegicus (Rat), this protein is Matrin-3 (Matr3).